The primary structure comprises 600 residues: Glutamine--fructose-6-phosphate aminotransferase [isomerizing] (600 aa).

The Nucleophile; for GATase activity role is filled by Cys2. The 216-residue stretch at 2 to 217 folds into the Glutamine amidotransferase type-2 domain; the sequence is CGIVGYIGQL…DKEMVIVTDK (216 aa). 2 consecutive SIS domains span residues 283 to 422 and 452 to 590; these read ISNA…SRGK and IARE…VDKP. The active-site For Fru-6P isomerization activity is the Lys595.

In terms of assembly, homodimer.

It is found in the cytoplasm. The enzyme catalyses D-fructose 6-phosphate + L-glutamine = D-glucosamine 6-phosphate + L-glutamate. Catalyzes the first step in hexosamine metabolism, converting fructose-6P into glucosamine-6P using glutamine as a nitrogen source. This is Glutamine--fructose-6-phosphate aminotransferase [isomerizing] from Bacillus licheniformis (strain ATCC 14580 / DSM 13 / JCM 2505 / CCUG 7422 / NBRC 12200 / NCIMB 9375 / NCTC 10341 / NRRL NRS-1264 / Gibson 46).